We begin with the raw amino-acid sequence, 459 residues long: Interleukin-7 receptor subunit alpha (459 aa).

The N-terminal stretch at 1–20 is a signal peptide; sequence MTILGTTFGVFFSLLQVVSG. At 21–241 the chain is on the extracellular side; sequence ESGYAQNGDL…NNHSGETNPT (221 aa). An intrachain disulfide couples C42 to C57. Residues N49 and N65 are each glycosylated (N-linked (GlcNAc...) asparagine). 2 cysteine pairs are disulfide-bonded: C74-C82 and C108-C118. The 101-residue stretch at 131–231 folds into the Fibronectin type-III domain; sequence APFDLSVIYR…PSYYFRTPEI (101 aa). An N-linked (GlcNAc...) asparagine glycan is attached at N182. Residues 217–221 carry the WSXWS motif motif; the sequence is WSEWS. The helical transmembrane segment at 242–262 threads the bilayer; the sequence is LLTISILSVLSVVLLVILACV. Topologically, residues 263–459 are cytoplasmic; it reads LWKKRIKPII…VTMSSFCQKR (197 aa). The short motif at 272–280 is the Box 1 motif element; that stretch reads IWPSLPDHK. Residue T282 is modified to Phosphothreonine; by PKC. The segment at 327 to 357 is disordered; it reads TVPPQLEESETQRPGGDVQSPSWPSENVVTT. The segment covering 345–357 has biased composition (polar residues); that stretch reads QSPSWPSENVVTT.

This sequence belongs to the type I cytokine receptor family. Type 4 subfamily. The IL7 receptor is a heterodimer of IL7R and IL2RG. The TSLP receptor is a heterodimer of CRLF2 and IL7R. Interacts with CD53. In terms of processing, N-glycosylated IL-7Ralpha binds IL7 300-fold more tightly than the unglycosylated form. Ubiquitinated by MARCHF8; leading to lysosomal degradation.

The protein resides in the cell membrane. In terms of biological role, receptor for interleukin-7. Also acts as a receptor for thymic stromal lymphopoietin (TSLP). This is Interleukin-7 receptor subunit alpha (IL7R) from Callithrix jacchus (White-tufted-ear marmoset).